Reading from the N-terminus, the 69-residue chain is Sperm protamine P1 (69 aa).

2 stretches are compositionally biased toward basic residues: residues 1–30 and 37–69; these read MARF…RRGG and KITR…RRRN. The interval 1-69 is disordered; the sequence is MARFRPSRSR…SRRRRRRRRN (69 aa).

The protein belongs to the protamine P1 family. In terms of tissue distribution, testis.

It is found in the nucleus. The protein resides in the chromosome. Protamines substitute for histones in the chromatin of sperm during the haploid phase of spermatogenesis. They compact sperm DNA into a highly condensed, stable and inactive complex. This chain is Sperm protamine P1 (PRM1), found in Tachyglossus aculeatus aculeatus (Southeast Australian short-beaked echidna).